Consider the following 1280-residue polypeptide: E3 ubiquitin-protein ligase RKP (1280 aa).

In terms of domain architecture, B30.2/SPRY spans 82–269 (KLHGDLDVSV…CELNFGAYPF (188 aa)). Residues 551-571 (SVLVSLFSVILHFLSEGFAML) traverse the membrane as a helical segment. Residues 669–719 (DRGKNTAQSSRGRCSSIPERSSHVAAECSAGSFSEEIDDKPSTSNQSDPDF) form a disordered region. Residues 834–854 (ALCMWVVQLLLVLSKMDSVFV) traverse the membrane as a helical segment. The segment at 1217 to 1252 (CCICYAGEANAMIAPCSHRSCYGCITRHLLNCQRCF) adopts an RING-type zinc-finger fold.

It is found in the membrane. The enzyme catalyses S-ubiquitinyl-[E2 ubiquitin-conjugating enzyme]-L-cysteine + [acceptor protein]-L-lysine = [E2 ubiquitin-conjugating enzyme]-L-cysteine + N(6)-ubiquitinyl-[acceptor protein]-L-lysine.. E3 ubiquitin-protein ligase that promotes the ubiquitination and proteasomal degradation of KRP1 and KRP2. This chain is E3 ubiquitin-protein ligase RKP (RKP), found in Arabidopsis thaliana (Mouse-ear cress).